We begin with the raw amino-acid sequence, 488 residues long: Rhamnulokinase (488 aa).

11 to 15 (ASSGR) contacts ATP. Substrate contacts are provided by residues A79 and 234 to 236 (HDT). Catalysis depends on D235, which acts as the Proton acceptor. T257 is an ATP binding site. N294 lines the substrate pocket. Residues Q302 and G401 each coordinate ATP.

It belongs to the rhamnulokinase family. Mg(2+) serves as cofactor.

It catalyses the reaction L-rhamnulose + ATP = L-rhamnulose 1-phosphate + ADP + H(+). Its pathway is carbohydrate degradation; L-rhamnose degradation; glycerone phosphate from L-rhamnose: step 2/3. Functionally, involved in the catabolism of L-rhamnose (6-deoxy-L-mannose). Catalyzes the transfer of the gamma-phosphate group from ATP to the 1-hydroxyl group of L-rhamnulose to yield L-rhamnulose 1-phosphate. The chain is Rhamnulokinase from Lactiplantibacillus plantarum (strain ATCC BAA-793 / NCIMB 8826 / WCFS1) (Lactobacillus plantarum).